Consider the following 206-residue polypeptide: Large ribosomal subunit protein uL4 (206 aa).

Positions 46–78 (GNRAQKDREQVKHTTKKPWRQKGTGRARAGMSS) are disordered. The segment covering 58 to 70 (HTTKKPWRQKGTG) has biased composition (basic residues).

This sequence belongs to the universal ribosomal protein uL4 family. As to quaternary structure, part of the 50S ribosomal subunit.

Functionally, one of the primary rRNA binding proteins, this protein initially binds near the 5'-end of the 23S rRNA. It is important during the early stages of 50S assembly. It makes multiple contacts with different domains of the 23S rRNA in the assembled 50S subunit and ribosome. In terms of biological role, forms part of the polypeptide exit tunnel. The polypeptide is Large ribosomal subunit protein uL4 (Burkholderia cenocepacia (strain ATCC BAA-245 / DSM 16553 / LMG 16656 / NCTC 13227 / J2315 / CF5610) (Burkholderia cepacia (strain J2315))).